The chain runs to 206 residues: Orotate phosphoribosyltransferase (206 aa).

5-phospho-alpha-D-ribose 1-diphosphate contacts are provided by residues arginine 93, lysine 97, histidine 99, and 119–127 (EDLISTGGT). Residue serine 123 participates in orotate binding.

The protein belongs to the purine/pyrimidine phosphoribosyltransferase family. PyrE subfamily. As to quaternary structure, homodimer. Mg(2+) is required as a cofactor.

It catalyses the reaction orotidine 5'-phosphate + diphosphate = orotate + 5-phospho-alpha-D-ribose 1-diphosphate. Its pathway is pyrimidine metabolism; UMP biosynthesis via de novo pathway; UMP from orotate: step 1/2. Functionally, catalyzes the transfer of a ribosyl phosphate group from 5-phosphoribose 1-diphosphate to orotate, leading to the formation of orotidine monophosphate (OMP). The protein is Orotate phosphoribosyltransferase of Bacillus caldolyticus.